A 398-amino-acid polypeptide reads, in one-letter code: Putative glutamate--cysteine ligase 2 (398 aa).

It belongs to the glutamate--cysteine ligase type 2 family. YbdK subfamily.

The catalysed reaction is L-cysteine + L-glutamate + ATP = gamma-L-glutamyl-L-cysteine + ADP + phosphate + H(+). ATP-dependent carboxylate-amine ligase which exhibits weak glutamate--cysteine ligase activity. The polypeptide is Putative glutamate--cysteine ligase 2 (Micrococcus luteus (strain ATCC 4698 / DSM 20030 / JCM 1464 / CCM 169 / CCUG 5858 / IAM 1056 / NBRC 3333 / NCIMB 9278 / NCTC 2665 / VKM Ac-2230) (Micrococcus lysodeikticus)).